We begin with the raw amino-acid sequence, 1134 residues long: Nck-associated protein 1-like (1134 aa).

Positions 638–671 are disordered; the sequence is KAKNKKSMKQRQAPRKGEPERDKPGAESHRKNRS. The span at 639 to 651 shows a compositional bias: basic residues; the sequence is AKNKKSMKQRQAP. Residues 652–666 are compositionally biased toward basic and acidic residues; the sequence is RKGEPERDKPGAESH. A helical transmembrane segment spans residues 999–1019; that stretch reads LLLIFLAVSLPLLATDPSSFF.

As to quaternary structure, in hematopoietic cells, component of the WAVE2 complex composed of ABI1, CYFIP1/SRA1, NCKAP1L/HEM1 and WASF2/WAVE2. Interacts with ARHGAP4, PIK3C3/VPS34 and PPP1R12A/MYPT1. Interacts with mammalian target of rapamycin complex 2 (mTORC2) components, including MTOR and RICTOR. Predominantly expressed in developing and mature hematopoietic cells. Also detected in urogenital tissues, including testis.

Its subcellular location is the membrane. It is found in the cytoplasm. Its function is as follows. Essential hematopoietic-specific regulator of the actin cytoskeleton. Controls lymphocyte development, activation, proliferation and homeostasis, erythrocyte membrane stability, as well as phagocytosis and migration by neutrophils and macrophages. Component of the WAVE2 complex which signals downstream of RAC to stimulate F-actin polymerization. Required for stabilization and/or translation of the WAVE2 complex proteins in hematopoietic cells. Within the WAVE2 complex, enables the cortical actin network to restrain excessive degranulation and granule release by T-cells. Required for efficient T-lymphocyte and neutrophil migration. Exhibits complex cycles of activation and inhibition to generate waves of propagating the assembly with actin. Also involved in mechanisms WAVE independent to regulate myosin and actin polymerization during neutrophil chemotaxis. In T-cells, required for proper mechanistic target of rapamycin complex 2 (mTORC2)-dependent AKT phosphorylation, cell proliferation and cytokine secretion, including that of IL2 and TNF. The protein is Nck-associated protein 1-like of Mus musculus (Mouse).